The following is a 215-amino-acid chain: Hibernation-associated plasma protein HP-25 (215 aa).

Residues 1–28 (MPAQRGGALSMGAAGFWILVLSITSALA) form the signal peptide. A disordered region spans residues 29 to 96 (DSNNQGNSEP…RPKSAFAVKL (68 aa)). Composition is skewed to pro residues over residues 39–51 (CGPP…PGIP) and 60–77 (LGPP…PQGP). A Collagen-like domain is found at 40 to 81 (GPPGPPGPPGIPGFPGAPGALGPPGPPGVPGIPGPQGPPGDV). Residues 85-215 (SSRPKSAFAV…VFFGYLLYGK (131 aa)) enclose the C1q domain. Residue N167 is glycosylated (N-linked (GlcNAc...) asparagine).

In terms of tissue distribution, plasma; synthesized in the liver.

The protein resides in the secreted. In terms of biological role, plasma proteins HP-20, HP-25, HP-27 and HP-55 form a 140 kDa complex via disulfide bonds in the plasma and are hibernation specific. This Tamias sibiricus (Siberian chipmunk) protein is Hibernation-associated plasma protein HP-25.